Reading from the N-terminus, the 509-residue chain is Photosystem II CP47 reaction center protein (509 aa).

A run of 6 helical transmembrane segments spans residues 21–36 (SVHL…WAGS), 101–115 (IVLS…VWHW), 140–156 (GIHL…FGAF), 203–218 (IAAG…FHLT), 237–252 (VLSS…AFVV), and 457–472 (VFAL…HGAR).

The protein belongs to the PsbB/PsbC family. PsbB subfamily. PSII is composed of 1 copy each of membrane proteins PsbA, PsbB, PsbC, PsbD, PsbE, PsbF, PsbH, PsbI, PsbJ, PsbK, PsbL, PsbM, PsbT, PsbX, PsbY, PsbZ, Psb30/Ycf12, peripheral proteins PsbO, CyanoQ (PsbQ), PsbU, PsbV and a large number of cofactors. It forms dimeric complexes. The cofactor is Binds multiple chlorophylls. PSII binds additional chlorophylls, carotenoids and specific lipids..

It is found in the cellular thylakoid membrane. One of the components of the core complex of photosystem II (PSII). It binds chlorophyll and helps catalyze the primary light-induced photochemical processes of PSII. PSII is a light-driven water:plastoquinone oxidoreductase, using light energy to abstract electrons from H(2)O, generating O(2) and a proton gradient subsequently used for ATP formation. The protein is Photosystem II CP47 reaction center protein of Nostoc sp. (strain PCC 7120 / SAG 25.82 / UTEX 2576).